We begin with the raw amino-acid sequence, 609 residues long: Non-structural glycoprotein (609 aa).

An N-terminal signal peptide occupies residues 1–24 (MDFLRQCTLIQVMILAITIRLTHG). The Extracellular segment spans residues 25 to 581 (GWTNFPESCV…EKDYWHEEYN (557 aa)). Residues Asn-87, Asn-375, Asn-465, Asn-472, Asn-478, Asn-506, Asn-529, Asn-551, and Asn-562 are each glycosylated (N-linked (GlcNAc...) asparagine; by host). Residues 582-599 (MWGLSGLSFLLLLALFYN) traverse the membrane as a helical segment. The Cytoplasmic segment spans residues 600–609 (KIKRKIKRKS).

This sequence belongs to the ephemerovirus glycoprotein family.

The protein resides in the membrane. The chain is Non-structural glycoprotein (GNS) from Adelaide River virus (ARV).